Consider the following 102-residue polypeptide: Small ribosomal subunit protein uS10 (102 aa).

Belongs to the universal ribosomal protein uS10 family. As to quaternary structure, part of the 30S ribosomal subunit.

Its function is as follows. Involved in the binding of tRNA to the ribosomes. This chain is Small ribosomal subunit protein uS10, found in Cupriavidus metallidurans (strain ATCC 43123 / DSM 2839 / NBRC 102507 / CH34) (Ralstonia metallidurans).